The primary structure comprises 384 residues: Galactokinase (384 aa).

A substrate-binding site is contributed by 34–37 (EHTD). 123–129 (SSGLSSS) contacts ATP. The Mg(2+) site is built by Ser129 and Glu161. Asp173 functions as the Proton acceptor in the catalytic mechanism. Tyr222 provides a ligand contact to substrate.

The protein belongs to the GHMP kinase family. GalK subfamily.

The protein resides in the cytoplasm. The enzyme catalyses alpha-D-galactose + ATP = alpha-D-galactose 1-phosphate + ADP + H(+). It participates in carbohydrate metabolism; galactose metabolism. In terms of biological role, catalyzes the transfer of the gamma-phosphate of ATP to D-galactose to form alpha-D-galactose-1-phosphate (Gal-1-P). This Haemophilus influenzae (strain ATCC 51907 / DSM 11121 / KW20 / Rd) protein is Galactokinase.